A 245-amino-acid chain; its full sequence is 14-3-3 protein zeta (245 aa).

Belongs to the 14-3-3 family. Homodimer. In terms of tissue distribution, present in all adult tissues examined with the highest levels in the brain.

Its subcellular location is the cytoplasm. In terms of biological role, adapter protein implicated in the regulation of a large spectrum of both general and specialized signaling pathways. Binds to a large number of partners, usually by recognition of a phosphoserine or phosphothreonine motif. Binding generally results in the modulation of the activity of the binding partner. This Xenopus laevis (African clawed frog) protein is 14-3-3 protein zeta (ywhaz).